The following is a 151-amino-acid chain: MVRAVCVLAGSGDVKGVVHFQQQDEGPVTVEGKIYGLTDGKHGFHIHEFGDNTNGCISAGPHFNPESKTHGAPEDAVRHVGDLGNVTAKDGVAEFKLTDSLISLKGNHSIIGRCAVVHEKEDDLGKGGNDESLKTGNAGGRLACGVIGLCQ.

C6 carries S-palmitoyl cysteine lipidation. Cu cation contacts are provided by H45, H47, and H62. C56 and C144 are disulfide-bonded. Residues H62, H70, H79, and D82 each contribute to the Zn(2+) site. H118 is a binding site for Cu cation.

It belongs to the Cu-Zn superoxide dismutase family. Homodimer. Cu cation is required as a cofactor. Requires Zn(2+) as cofactor.

Its subcellular location is the cytoplasm. It is found in the nucleus. It carries out the reaction 2 superoxide + 2 H(+) = H2O2 + O2. In terms of biological role, destroys radicals which are normally produced within the cells and which are toxic to biological systems. This is Superoxide dismutase [Cu-Zn] (sod1) from Xenopus tropicalis (Western clawed frog).